The chain runs to 430 residues: Acylsugar acyltransferase 3 (430 aa).

Active-site proton acceptor residues include histidine 155 and aspartate 367.

Belongs to the plant acyltransferase family. In terms of assembly, monomer. As to expression, expressed in tip cells of type I trichomes of stems and petioles, sites of acylsugars production.

Catalyzes the transfer of short (four to five carbons) branched acyl chains to the furanose ring of di-acylsucrose acceptors to produce tri-acylsucroses such as S3:15 (5,5,5), S4:17 (2,5,5,5) and S4:24 (2,5,5,12) acylsucroses. The polypeptide is Acylsugar acyltransferase 3 (Solanum lycopersicum (Tomato)).